We begin with the raw amino-acid sequence, 1020 residues long: C2 and GRAM domain-containing protein At1g03370 (1020 aa).

In terms of domain architecture, C2 1 spans methionine 1–tyrosine 102. Ca(2+) is bound by residues aspartate 17, aspartate 23, aspartate 69, aspartate 71, and aspartate 77. 2 stretches are compositionally biased toward polar residues: residues threonine 134–arginine 144 and threonine 158–proline 172. Positions threonine 134–proline 172 are disordered. The region spanning serine 249–aspartate 421 is the VASt 1 domain. A helical membrane pass occupies residues phenylalanine 454–isoleucine 474. The 119-residue stretch at glutamine 517 to valine 635 folds into the C2 2 domain. Ca(2+)-binding residues include aspartate 551, aspartate 557, aspartate 604, phenylalanine 605, and aspartate 606. One can recognise a GRAM domain in the interval alanine 689–valine 752. In terms of domain architecture, VASt 2 spans arginine 848–tyrosine 1010.

Requires Ca(2+) as cofactor.

The protein localises to the membrane. This chain is C2 and GRAM domain-containing protein At1g03370, found in Arabidopsis thaliana (Mouse-ear cress).